Reading from the N-terminus, the 88-residue chain is Small ribosomal subunit protein uS15 (88 aa).

The protein belongs to the universal ribosomal protein uS15 family. As to quaternary structure, part of the 30S ribosomal subunit. Forms a bridge to the 50S subunit in the 70S ribosome, contacting the 23S rRNA.

In terms of biological role, one of the primary rRNA binding proteins, it binds directly to 16S rRNA where it helps nucleate assembly of the platform of the 30S subunit by binding and bridging several RNA helices of the 16S rRNA. Functionally, forms an intersubunit bridge (bridge B4) with the 23S rRNA of the 50S subunit in the ribosome. In Hydrogenovibrio crunogenus (strain DSM 25203 / XCL-2) (Thiomicrospira crunogena), this protein is Small ribosomal subunit protein uS15.